Consider the following 117-residue polypeptide: Putative hydrolase fragment YghX (117 aa).

The interval 91 to 117 is disordered; the sequence is DGLSSVGGYPGNDDKGRELQQQVDPTN.

The polypeptide is Putative hydrolase fragment YghX (yghX) (Escherichia coli (strain K12)).